A 299-amino-acid polypeptide reads, in one-letter code: Bifunctional protein FolD (299 aa).

Residues 179–181 (GPG) and Ile-245 contribute to the NADP(+) site.

Belongs to the tetrahydrofolate dehydrogenase/cyclohydrolase family. As to quaternary structure, homodimer.

The catalysed reaction is (6R)-5,10-methylene-5,6,7,8-tetrahydrofolate + NADP(+) = (6R)-5,10-methenyltetrahydrofolate + NADPH. The enzyme catalyses (6R)-5,10-methenyltetrahydrofolate + H2O = (6R)-10-formyltetrahydrofolate + H(+). The protein operates within one-carbon metabolism; tetrahydrofolate interconversion. Functionally, catalyzes the oxidation of 5,10-methylenetetrahydrofolate to 5,10-methenyltetrahydrofolate and then the hydrolysis of 5,10-methenyltetrahydrofolate to 10-formyltetrahydrofolate. The chain is Bifunctional protein FolD from Deinococcus radiodurans (strain ATCC 13939 / DSM 20539 / JCM 16871 / CCUG 27074 / LMG 4051 / NBRC 15346 / NCIMB 9279 / VKM B-1422 / R1).